The sequence spans 142 residues: MKTFTAKPETVKREWFVVDAAGQTLGRLATEIATRLRGKHKPEYTPHVDTGDYIVVINAEQVRVTGAKSSDKMYYSHSGFPGGIKEINFEKLIAKAPERVIETAVKGMLPKNPLGRDMYRKLKVYAGAAHPHTAQQPQELKI.

This sequence belongs to the universal ribosomal protein uL13 family. In terms of assembly, part of the 50S ribosomal subunit.

Its function is as follows. This protein is one of the early assembly proteins of the 50S ribosomal subunit, although it is not seen to bind rRNA by itself. It is important during the early stages of 50S assembly. This chain is Large ribosomal subunit protein uL13, found in Pseudomonas putida (strain ATCC 700007 / DSM 6899 / JCM 31910 / BCRC 17059 / LMG 24140 / F1).